Here is a 424-residue protein sequence, read N- to C-terminus: Imidazolonepropionase (424 aa).

Residues H84 and H86 each coordinate Fe(3+). Residues H84 and H86 each coordinate Zn(2+). 4-imidazolone-5-propanoate is bound by residues R93, Y156, and H189. Y156 contributes to the N-formimidoyl-L-glutamate binding site. Position 254 (H254) interacts with Fe(3+). H254 provides a ligand contact to Zn(2+). E257 is a 4-imidazolone-5-propanoate binding site. D328 is a Fe(3+) binding site. D328 is a Zn(2+) binding site. N-formimidoyl-L-glutamate-binding residues include N330 and G332. S333 is a binding site for 4-imidazolone-5-propanoate.

It belongs to the metallo-dependent hydrolases superfamily. HutI family. It depends on Zn(2+) as a cofactor. Fe(3+) is required as a cofactor.

The protein localises to the cytoplasm. The catalysed reaction is 4-imidazolone-5-propanoate + H2O = N-formimidoyl-L-glutamate. It functions in the pathway amino-acid degradation; L-histidine degradation into L-glutamate; N-formimidoyl-L-glutamate from L-histidine: step 3/3. Catalyzes the hydrolytic cleavage of the carbon-nitrogen bond in imidazolone-5-propanoate to yield N-formimidoyl-L-glutamate. It is the third step in the universal histidine degradation pathway. The sequence is that of Imidazolonepropionase from Geobacillus sp. (strain WCH70).